The primary structure comprises 449 residues: Acetolactate synthase small subunit 1, chloroplastic (449 aa).

Residues 1-30 (MEHIQTRTTLSQLSTLPSDKRLGAIRFKCL) constitute a chloroplast transit peptide. ACT domains are found at residues 31–98 (LVMK…DLSK) and 259–333 (TLSM…DITH).

The protein belongs to the acetolactate synthase small subunit family. In terms of assembly, the acetolactate synthase complex contains both large catalytic subunits and small regulatory subunits.

It localises to the plastid. The protein resides in the chloroplast. The protein operates within amino-acid biosynthesis; L-isoleucine biosynthesis; L-isoleucine from 2-oxobutanoate: step 1/4. It functions in the pathway amino-acid biosynthesis; L-valine biosynthesis; L-valine from pyruvate: step 1/4. Its function is as follows. Regulatory subunit of acetohydroxy-acid synthase. Probably involved in feedback inhibition by branched-chain amino acids. Not involved in herbicide tolerance. The sequence is that of Acetolactate synthase small subunit 1, chloroplastic from Nicotiana plumbaginifolia (Leadwort-leaved tobacco).